The primary structure comprises 367 residues: Queuine tRNA-ribosyltransferase (367 aa).

Catalysis depends on Asp92, which acts as the Proton acceptor. Residues Asp92–Phe96, Asp146, Gln188, and Gly215 contribute to the substrate site. The tract at residues Gly246–Asp252 is RNA binding. Residue Asp265 is the Nucleophile of the active site. Residues Cys303, Cys305, Cys308, and His334 each coordinate Zn(2+).

It belongs to the queuine tRNA-ribosyltransferase family. In terms of assembly, homodimer. Within each dimer, one monomer is responsible for RNA recognition and catalysis, while the other monomer binds to the replacement base PreQ1. It depends on Zn(2+) as a cofactor.

It catalyses the reaction 7-aminomethyl-7-carbaguanine + guanosine(34) in tRNA = 7-aminomethyl-7-carbaguanosine(34) in tRNA + guanine. The protein operates within tRNA modification; tRNA-queuosine biosynthesis. Its function is as follows. Catalyzes the base-exchange of a guanine (G) residue with the queuine precursor 7-aminomethyl-7-deazaguanine (PreQ1) at position 34 (anticodon wobble position) in tRNAs with GU(N) anticodons (tRNA-Asp, -Asn, -His and -Tyr). Catalysis occurs through a double-displacement mechanism. The nucleophile active site attacks the C1' of nucleotide 34 to detach the guanine base from the RNA, forming a covalent enzyme-RNA intermediate. The proton acceptor active site deprotonates the incoming PreQ1, allowing a nucleophilic attack on the C1' of the ribose to form the product. After dissociation, two additional enzymatic reactions on the tRNA convert PreQ1 to queuine (Q), resulting in the hypermodified nucleoside queuosine (7-(((4,5-cis-dihydroxy-2-cyclopenten-1-yl)amino)methyl)-7-deazaguanosine). This Francisella tularensis subsp. holarctica (strain FTNF002-00 / FTA) protein is Queuine tRNA-ribosyltransferase.